We begin with the raw amino-acid sequence, 356 residues long: MFEAFIYNISVIVAGIYLFHRLQYSENKRMVFSKAYVTVLMTIVSLLLSVYPIPYREDYLIHLTFVPLLFLGRFTNMVYTLSATVIVAIVEIVVFNNSIMYGVTLIVIAAVTSAIGPFLKQNDVLSLLILNVVTIIILFGVALVSPIYTLSEVIILIPISLIITLASAITFVDIWHFFSLVNRYENEDKYDYLTGLGNVKEFDRHLNEISRKAEKEHQSIALLLIDIDGFKDVNDTYSHKSGDAVLKQMSQLLKNYVPNQFKIFRNGGEEFSVVIHNYSLDQSVKLAENIRSGVEKSSFHLPNKEVIKLSVSIGVGYLTDDDPKSQRKVFKDADDMVHVAKNQGRNKVMFNPIINL.

A run of 6 helical transmembrane segments spans residues 2 to 22 (FEAF…FHRL), 35 to 55 (AYVT…PIPY), 74 to 94 (FTNM…EIVV), 99 to 119 (IMYG…GPFL), 124 to 144 (VLSL…VALV), and 154 to 174 (IILI…FVDI). Residues 218-353 (QSIALLLIDI…GRNKVMFNPI (136 aa)) form the GGDEF domain.

It localises to the cell membrane. This is an uncharacterized protein from Staphylococcus aureus (strain bovine RF122 / ET3-1).